The sequence spans 463 residues: L-seryl-tRNA(Sec) selenium transferase (463 aa).

At Lys-295 the chain carries N6-(pyridoxal phosphate)lysine.

This sequence belongs to the SelA family. Homodecamer; pentamer of dimers. Binds only one seryl-tRNA(Sec) per dimer. Pyridoxal 5'-phosphate serves as cofactor.

Its subcellular location is the cytoplasm. It carries out the reaction L-seryl-tRNA(Sec) + selenophosphate + H(+) = L-selenocysteinyl-tRNA(Sec) + phosphate. It participates in aminoacyl-tRNA biosynthesis; selenocysteinyl-tRNA(Sec) biosynthesis; selenocysteinyl-tRNA(Sec) from L-seryl-tRNA(Sec) (bacterial route): step 1/1. Functionally, converts seryl-tRNA(Sec) to selenocysteinyl-tRNA(Sec) required for selenoprotein biosynthesis. The protein is L-seryl-tRNA(Sec) selenium transferase of Escherichia coli O7:K1 (strain IAI39 / ExPEC).